Here is a 300-residue protein sequence, read N- to C-terminus: F-box/LRR-repeat protein 15 (300 aa).

Met1 bears the N-acetylmethionine mark. Residues 19-66 enclose the F-box domain; the sequence is LLDLPWEDVLLPHILSRVPLRQLLRLQRVSRAFRALVQLHLAGLRRFD. The segment at 113–269 is interaction with SMURF1; the sequence is NPQLRSVALA…EPSLSRLRKR (157 aa). 5 LRR repeats span residues 141 to 162, 167 to 188, 194 to 215, 220 to 241, and 246 to 267; these read RLQR…RGLA, ALEE…VYLA, GLRS…QELA, ELEH…RTLA, and ALRS…SRLR.

This sequence belongs to the FBXL15 family. Part of the SCF (SKP1-CUL1-F-box) E3 ubiquitin-protein ligase complex SCF(FBXL15) composed of CUL1, SKP1, RBX1 and FBXL15.

It localises to the cytoplasm. The protein operates within protein modification; protein ubiquitination. Substrate recognition component of a SCF (SKP1-CUL1-F-box protein) E3 ubiquitin-protein ligase complex which mediates the ubiquitination and subsequent proteasomal degradation of SMURF1, thereby acting as a positive regulator of the BMP signaling pathway. Required for dorsal/ventral pattern formation and bone mass maintenance. Also mediates ubiquitination of SMURF2 and WWP2. This Canis lupus familiaris (Dog) protein is F-box/LRR-repeat protein 15 (FBXL15).